A 129-amino-acid polypeptide reads, in one-letter code: Glycine cleavage system H protein (129 aa).

The Lipoyl-binding domain maps to 23-104 (SVTVGITHHA…AYTAWLFKIK (82 aa)). Lys-64 is subject to N6-lipoyllysine.

The protein belongs to the GcvH family. In terms of assembly, the glycine cleavage system is composed of four proteins: P, T, L and H. It depends on (R)-lipoate as a cofactor.

In terms of biological role, the glycine cleavage system catalyzes the degradation of glycine. The H protein shuttles the methylamine group of glycine from the P protein to the T protein. The polypeptide is Glycine cleavage system H protein (Thiobacillus denitrificans (strain ATCC 25259 / T1)).